The primary structure comprises 236 residues: Ubiquinone biosynthesis O-methyltransferase (236 aa).

Residues R40, G59, D80, and L124 each coordinate S-adenosyl-L-methionine.

Belongs to the methyltransferase superfamily. UbiG/COQ3 family.

The enzyme catalyses a 3-demethylubiquinol + S-adenosyl-L-methionine = a ubiquinol + S-adenosyl-L-homocysteine + H(+). The catalysed reaction is a 3-(all-trans-polyprenyl)benzene-1,2-diol + S-adenosyl-L-methionine = a 2-methoxy-6-(all-trans-polyprenyl)phenol + S-adenosyl-L-homocysteine + H(+). It functions in the pathway cofactor biosynthesis; ubiquinone biosynthesis. Functionally, O-methyltransferase that catalyzes the 2 O-methylation steps in the ubiquinone biosynthetic pathway. This is Ubiquinone biosynthesis O-methyltransferase from Nitrosococcus oceani (strain ATCC 19707 / BCRC 17464 / JCM 30415 / NCIMB 11848 / C-107).